Consider the following 817-residue polypeptide: Protein-glutamine gamma-glutamyltransferase K (817 aa).

2 disordered regions span residues 1–38 (MMDGPRSDVGRWGGNPLQPPTTPSPEPEPEPDGRSRRG) and 59–105 (DDWG…DGTI). The segment at 1-100 (MMDGPRSDVG…VSRGSGVNAA (100 aa)) is membrane anchorage region. Residues 17-26 (LQPPTTPSPE) show a composition bias toward pro residues. A Phosphothreonine modification is found at threonine 22. Phosphoserine is present on residues serine 24, serine 68, serine 82, serine 85, serine 92, and serine 95. Low complexity predominate over residues 71–84 (RGSSSGTRRPGSRG). Residues cysteine 377, histidine 436, and aspartate 459 contribute to the active site. Ca(2+) contacts are provided by asparagine 499, aspartate 501, glutamate 548, and glutamate 553. The tract at residues 793 to 817 (GGFFSDAGGDSHLGETIPMASRGGA) is disordered.

It belongs to the transglutaminase superfamily. Transglutaminase family. In terms of assembly, interacts with PLAAT4. Requires Ca(2+) as cofactor. Post-translationally, palmitoylated. In terms of processing, the membrane anchorage region possesses a cluster of five cysteines within which fatty acid(s) may become thioester-linked. It is subject to phorbol ester-stimulated phosphorylation and is hypersensitive to proteolysis, which releases the enzyme in a soluble form. Tyrosine-phosphorylated.

The protein localises to the membrane. It catalyses the reaction L-glutaminyl-[protein] + L-lysyl-[protein] = [protein]-L-lysyl-N(6)-5-L-glutamyl-[protein] + NH4(+). In terms of biological role, catalyzes the cross-linking of proteins and the conjugation of polyamines to proteins. Responsible for cross-linking epidermal proteins during formation of the stratum corneum. Involved in cell proliferation. The protein is Protein-glutamine gamma-glutamyltransferase K (TGM1) of Homo sapiens (Human).